A 1428-amino-acid chain; its full sequence is DNA polymerase III PolC-type (1428 aa).

In terms of domain architecture, Exonuclease spans 414-570 (FVVFDVETTG…YDAEATGYLL (157 aa)).

It belongs to the DNA polymerase type-C family. PolC subfamily.

The protein localises to the cytoplasm. The enzyme catalyses DNA(n) + a 2'-deoxyribonucleoside 5'-triphosphate = DNA(n+1) + diphosphate. Its function is as follows. Required for replicative DNA synthesis. This DNA polymerase also exhibits 3' to 5' exonuclease activity. The sequence is that of DNA polymerase III PolC-type from Oceanobacillus iheyensis (strain DSM 14371 / CIP 107618 / JCM 11309 / KCTC 3954 / HTE831).